Reading from the N-terminus, the 389-residue chain is Succinate--CoA ligase [ADP-forming] subunit beta (389 aa).

The 236-residue stretch at 9–244 (KQLFADYGLP…ETQEDPREVE (236 aa)) folds into the ATP-grasp domain. Residues Lys-46, 53–55 (GRG), Glu-99, Gly-102, and Glu-107 contribute to the ATP site. Positions 199 and 213 each coordinate Mg(2+). Substrate is bound by residues Asn-264 and 321–323 (GIV).

This sequence belongs to the succinate/malate CoA ligase beta subunit family. Heterotetramer of two alpha and two beta subunits. It depends on Mg(2+) as a cofactor.

The catalysed reaction is succinate + ATP + CoA = succinyl-CoA + ADP + phosphate. It carries out the reaction GTP + succinate + CoA = succinyl-CoA + GDP + phosphate. It participates in carbohydrate metabolism; tricarboxylic acid cycle; succinate from succinyl-CoA (ligase route): step 1/1. Succinyl-CoA synthetase functions in the citric acid cycle (TCA), coupling the hydrolysis of succinyl-CoA to the synthesis of either ATP or GTP and thus represents the only step of substrate-level phosphorylation in the TCA. The beta subunit provides nucleotide specificity of the enzyme and binds the substrate succinate, while the binding sites for coenzyme A and phosphate are found in the alpha subunit. The protein is Succinate--CoA ligase [ADP-forming] subunit beta of Tolumonas auensis (strain DSM 9187 / NBRC 110442 / TA 4).